Reading from the N-terminus, the 747-residue chain is Threonine synthase-like 1 (747 aa).

Lys-351 carries the N6-(pyridoxal phosphate)lysine modification.

It belongs to the threonine synthase family. The cofactor is pyridoxal 5'-phosphate.

This is Threonine synthase-like 1 (Thnsl1) from Mus musculus (Mouse).